Consider the following 487-residue polypeptide: 1,4-beta-D-glucan cellobiohydrolase CEL6A (487 aa).

A signal peptide spans 1–17 (MASKLFLAAALLQGALS). A CBM1 domain is found at 27-63 (ACAAQWGQCGGQDYTGPTCCQSGSTCVVSNQWYSQCL). 2 cysteine pairs are disulfide-bonded: C35-C52 and C46-C62. A compositionally biased stretch (low complexity) spans 64-117 (PGSSNPTTTSRTSTSSSSSTSRTSSSTSRPPSSVPTTPTSVPPTITTTPTTTPT). Positions 64–127 (PGSSNPTTTS…GGSGPGTTAS (64 aa)) are disordered. Substrate contacts are provided by W175 and D177. D216 is an active-site residue. Residue D262 is the Proton donor of the active site. Residues H307, W310, N346, W407, K435, and E439 each coordinate substrate. D441 serves as the catalytic Proton acceptor.

The protein belongs to the glycosyl hydrolase 6 (cellulase B) family.

The protein localises to the secreted. The catalysed reaction is Hydrolysis of (1-&gt;4)-beta-D-glucosidic linkages in cellulose and cellotetraose, releasing cellobiose from the non-reducing ends of the chains.. Functionally, exoglucanase that plays an important function in biomass degradation by catalyzing the hydrolysis of the non-reducing end beta-1,4-glucosidic linkages in cellulose and cellotetraose to release cellobiose. Shows higher hydrolytic activities on phosphoric acid-swollen cellulose (PSC), beta-glucan, and cellooligosaccharide derivatives than on cellulose, of which the best substrates were cellooligosaccharides. The sequence is that of 1,4-beta-D-glucan cellobiohydrolase CEL6A from Pyricularia oryzae (strain 70-15 / ATCC MYA-4617 / FGSC 8958) (Rice blast fungus).